Here is a 285-residue protein sequence, read N- to C-terminus: UPF0014 membrane protein STAR2 (285 aa).

7 helical membrane passes run 30–50, 64–84, 88–108, 119–139, 148–168, 203–225, and 240–262; these read FLVGMLKPVAATAVVAMAVAL, YAMARAFLQLSVIGFVLQFIF, SAAWILLAYLFMVTVAGYTAG, HIAAVSILAGTSVTMALLVAL, YIIPVAGMMVGNAMTVTGVTM, SLVIALSPVIDNAKTVGLIALPG, and AIQLQIVVMNMLMGASTVSSILS.

The protein belongs to the UPF0014 family. Interacts with STAR2. In terms of tissue distribution, expressed in roots.

The protein resides in the membrane. Associates with STAR2 to form a functional transmembrane ABC transporter required for detoxification of aluminum (Al) in roots. Can specifically transport UDP-glucose. This chain is UPF0014 membrane protein STAR2, found in Oryza sativa subsp. japonica (Rice).